The primary structure comprises 258 residues: Global transcriptional regulator CodY (258 aa).

The tract at residues 1–156 (MSSLLSKTRR…SATIVGMEML (156 aa)) is GAF domain. The segment at residues 204-223 (ASKIADKVGITRSVIVNALR) is a DNA-binding region (H-T-H motif).

This sequence belongs to the CodY family.

It localises to the cytoplasm. Its function is as follows. DNA-binding global transcriptional regulator which is involved in the adaptive response to starvation and acts by directly or indirectly controlling the expression of numerous genes in response to nutrient availability. During rapid exponential growth, CodY is highly active and represses genes whose products allow adaptation to nutrient depletion. The chain is Global transcriptional regulator CodY from Clostridium botulinum (strain Alaska E43 / Type E3).